The chain runs to 38 residues: Large ribosomal subunit protein bL36 (38 aa).

The protein belongs to the bacterial ribosomal protein bL36 family.

This is Large ribosomal subunit protein bL36 from Prochlorococcus marinus (strain MIT 9312).